A 416-amino-acid polypeptide reads, in one-letter code: Succinate--CoA ligase [ADP-forming] subunit beta (416 aa).

The N-terminal 14 residues, 1–14 (MLRMAPKTVGAVRN), are a transit peptide targeting the hydrogenosome. Residues Lys64, 71-73 (GRG), and Glu132 each bind ATP. Asn224 and Asp242 together coordinate Mg(2+). Substrate is bound by residues Asn293 and 350–352 (GIM).

Belongs to the succinate/malate CoA ligase beta subunit family. Heterodimer of an alpha and a beta subunit. The cofactor is Mg(2+).

Its subcellular location is the hydrogenosome. It carries out the reaction succinate + ATP + CoA = succinyl-CoA + ADP + phosphate. It functions in the pathway carbohydrate metabolism; tricarboxylic acid cycle; succinate from succinyl-CoA (ligase route): step 1/1. In terms of biological role, succinyl-CoA synthetase functions in the citric acid cycle (TCA), coupling the hydrolysis of succinyl-CoA to the synthesis of ATP and thus represents the only step of substrate-level phosphorylation in the TCA. The beta subunit provides nucleotide specificity of the enzyme and binds the substrate succinate, while the binding sites for coenzyme A and phosphate are found in the alpha subunit. This Blastocystis sp. subtype 1 (strain ATCC 50177 / NandII) protein is Succinate--CoA ligase [ADP-forming] subunit beta (SCSb).